A 316-amino-acid chain; its full sequence is Transaldolase (316 aa).

Lys125 functions as the Schiff-base intermediate with substrate in the catalytic mechanism.

The protein belongs to the transaldolase family. Type 1 subfamily. In terms of assembly, homodimer.

The protein localises to the cytoplasm. It catalyses the reaction D-sedoheptulose 7-phosphate + D-glyceraldehyde 3-phosphate = D-erythrose 4-phosphate + beta-D-fructose 6-phosphate. It participates in carbohydrate degradation; pentose phosphate pathway; D-glyceraldehyde 3-phosphate and beta-D-fructose 6-phosphate from D-ribose 5-phosphate and D-xylulose 5-phosphate (non-oxidative stage): step 2/3. Functionally, transaldolase is important for the balance of metabolites in the pentose-phosphate pathway. This chain is Transaldolase, found in Acidovorax sp. (strain JS42).